The primary structure comprises 367 residues: WAT1-related protein At3g28050 (367 aa).

Helical transmembrane passes span 10-30 (VLPV…NTLF), 40-60 (FHVF…PSLF), 73-93 (FSIL…NIMG), 103-123 (TLAS…AVVF), 142-162 (TVVS…VVIA), 179-199 (WILG…WYIV), 211-231 (FTVV…VTLF), 246-266 (IALV…NTIH), 276-296 (LFVA…GVIF), and 301-321 (LYIG…TVMW). 2 consecutive EamA domains span residues 25 to 153 (GLNT…FIVT) and 195 to 319 (LWYI…FYTV). Residues 338–367 (HEEANEADLDSPSGSQKAPLLESYKNDEHV) are disordered.

It belongs to the drug/metabolite transporter (DMT) superfamily. Plant drug/metabolite exporter (P-DME) (TC 2.A.7.4) family.

It is found in the membrane. In Arabidopsis thaliana (Mouse-ear cress), this protein is WAT1-related protein At3g28050.